The chain runs to 693 residues: Translation factor GUF1 homolog, chloroplastic (693 aa).

The N-terminal 51 residues, 1–51 (MATDLSSSSTLLLSRNCKTPPFYHTTNSLSLSKTHHLYASRNAVVSRLRLL), are a transit peptide targeting the chloroplast. Positions 86 to 267 (SNIRNFCIIA…AIVERIPSPR (182 aa)) constitute a tr-type G domain. Residues 95-102 (AHIDHGKS), 160-164 (DTPGH), and 214-217 (NKID) contribute to the GTP site.

Belongs to the TRAFAC class translation factor GTPase superfamily. Classic translation factor GTPase family. LepA subfamily.

It localises to the plastid. The protein localises to the chloroplast. It catalyses the reaction GTP + H2O = GDP + phosphate + H(+). Promotes chloroplast protein synthesis. May act as a fidelity factor of the translation reaction, by catalyzing a one-codon backward translocation of tRNAs on improperly translocated ribosomes. This is Translation factor GUF1 homolog, chloroplastic from Ricinus communis (Castor bean).